The primary structure comprises 250 residues: tRNA (guanine-N(1)-)-methyltransferase (250 aa).

S-adenosyl-L-methionine is bound by residues G116 and 136 to 141 (IGDYVL).

The protein belongs to the RNA methyltransferase TrmD family. Homodimer.

It is found in the cytoplasm. The enzyme catalyses guanosine(37) in tRNA + S-adenosyl-L-methionine = N(1)-methylguanosine(37) in tRNA + S-adenosyl-L-homocysteine + H(+). Specifically methylates guanosine-37 in various tRNAs. The chain is tRNA (guanine-N(1)-)-methyltransferase from Pseudomonas syringae pv. tomato (strain ATCC BAA-871 / DC3000).